Here is a 501-residue protein sequence, read N- to C-terminus: Cytochrome P450 2S1 (501 aa).

Cysteine 441 is a heme binding site.

Belongs to the cytochrome P450 family. It depends on heme as a cofactor.

It localises to the endoplasmic reticulum membrane. The protein localises to the microsome membrane. It carries out the reaction all-trans-retinoate + reduced [NADPH--hemoprotein reductase] + O2 = all-trans-5,6-epoxyretinoate + oxidized [NADPH--hemoprotein reductase] + H2O + H(+). The catalysed reaction is all-trans-retinoate + reduced [NADPH--hemoprotein reductase] + O2 = all-trans-4-hydroxyretinoate + oxidized [NADPH--hemoprotein reductase] + H2O + H(+). It catalyses the reaction (5S)-hydroperoxy-(6E,8Z,11Z,14Z)-eicosatetraenoate = 5-oxo-(6E,8Z,11Z,14Z)-eicosatetraenoate + H2O. The enzyme catalyses (12S)-hydroperoxy-(5Z,8Z,10E,14Z)-eicosatetraenoate = 12-oxo-(5Z,8Z,10E,14Z)-eicosatetraenoate + H2O. It carries out the reaction (15S)-hydroperoxy-(5Z,8Z,11Z,13E)-eicosatetraenoate = 15-oxo-(5Z,8Z,11Z,13E)-eicosatetraenoate + H2O. The catalysed reaction is prostaglandin H2 = thromboxane A2. It catalyses the reaction prostaglandin H2 = (12S)-hydroxy-(5Z,8E,10E)-heptadecatrienoate + malonaldehyde. The enzyme catalyses (13S)-hydroperoxy-(9Z,11E)-octadecadienoate = 13-oxo-(9Z,11E)-octadecadienoate + H2O. The protein operates within lipid metabolism; fatty acid metabolism. In terms of biological role, a cytochrome P450 monooxygenase involved in the metabolism of retinoids and eicosanoids. In epidermis, may contribute to the oxidative metabolism of all-trans-retinoic acid. For this activity, uses molecular oxygen inserting one oxygen atom into a substrate, and reducing the second into a water molecule, with two electrons provided by NADPH via cytochrome P450 reductase (NADPH--hemoprotein reductase). Additionally, displays peroxidase and isomerase activities toward various oxygenated eicosanoids such as prostaglandin H2 (PGH2) and hydroperoxyeicosatetraenoates (HPETEs). Independently of cytochrome P450 reductase, NADPH, and O2, catalyzes the breakdown of PGH2 to hydroxyheptadecatrienoic acid (HHT) and malondialdehyde (MDA), which is known to act as a mediator of DNA damage. This is Cytochrome P450 2S1 (Cyp2s1) from Mus musculus (Mouse).